We begin with the raw amino-acid sequence, 175 residues long: MAEKRNIFLVGPMGAGKSTIGRQLAQLLNMEFIDSDNEIEQRAGADISWIFDIEGEDGFRKREERIINELTQKQGIVLSTGGGAILSKETRNHLSARGIVIYLQTTVDKQFERTQRDKKRPLLQGVEDVRKVLEDLAQVRNPLYEEVADITLPTDEQSAKLMASHIVELIDNFNS.

Position 14-19 (glycine 14–threonine 19) interacts with ATP. Residue serine 18 coordinates Mg(2+). Substrate-binding residues include aspartate 36, arginine 60, and glycine 82. Residue arginine 120 participates in ATP binding. Arginine 140 contributes to the substrate binding site. Residue glutamine 157 coordinates ATP.

This sequence belongs to the shikimate kinase family. Monomer. Requires Mg(2+) as cofactor.

Its subcellular location is the cytoplasm. The enzyme catalyses shikimate + ATP = 3-phosphoshikimate + ADP + H(+). It participates in metabolic intermediate biosynthesis; chorismate biosynthesis; chorismate from D-erythrose 4-phosphate and phosphoenolpyruvate: step 5/7. Functionally, catalyzes the specific phosphorylation of the 3-hydroxyl group of shikimic acid using ATP as a cosubstrate. This Mannheimia succiniciproducens (strain KCTC 0769BP / MBEL55E) protein is Shikimate kinase.